Consider the following 269-residue polypeptide: MHIILTGTGLVGAIALDAMLQESSIDKITIISRKPVPQAEGQSKVEVIIQEDLSTYSDETLAKLKGAHGCIWTAGPPLMAVTRQEYEYGHIDLPVKAAKAFAALNDKFNFVYVSHDGCHDTRAVYIFDVKARAEEKLFQLHHDPSKRLEIKTKGGIEEQESLSSFVLYCIRPALIDYSTHDAIKPWLKPLPLAKKWTNGVILPLYRFLGLTSIMGTSQELGQAMKDLVISDGRDVDVAGASPEGRCLGAVGMRNWTQARNESPEDTVAV.

The signal sequence occupies residues 1–15 (MHIILTGTGLVGAIA). Asn254 carries an N-linked (GlcNAc...) asparagine glycan.

Its function is as follows. Part of the gene cluster that mediates the biosynthesis of the lipopeptide antibiotics leucinostatins that show extensive biological activities, including antimalarial, antiviral, antibacterial, antifungal, and antitumor activities, as well as phytotoxic. The function of lcsT within the leucinostatins biosynthesis has not been identified yet. In Purpureocillium lilacinum (Paecilomyces lilacinus), this protein is Leucinostatins biosynthesis cluster protein T.